A 364-amino-acid chain; its full sequence is Dihydroorotate dehydrogenase (quinone) (364 aa).

FMN-binding positions include 61–65 and threonine 85; that span reads AGFDK. Lysine 65 lines the substrate pocket. 110–114 lines the substrate pocket; sequence NRMGF. Positions 139 and 170 each coordinate FMN. Asparagine 170 serves as a coordination point for substrate. The Nucleophile role is filled by serine 173. Residue asparagine 175 coordinates substrate. Lysine 214 and alanine 242 together coordinate FMN. Residue 243 to 244 coordinates substrate; it reads NT. Residues glycine 266, glycine 295, and 316 to 317 each bind FMN; that span reads YS.

This sequence belongs to the dihydroorotate dehydrogenase family. Type 2 subfamily. Monomer. FMN is required as a cofactor.

It localises to the cell membrane. It catalyses the reaction (S)-dihydroorotate + a quinone = orotate + a quinol. It functions in the pathway pyrimidine metabolism; UMP biosynthesis via de novo pathway; orotate from (S)-dihydroorotate (quinone route): step 1/1. Functionally, catalyzes the conversion of dihydroorotate to orotate with quinone as electron acceptor. The chain is Dihydroorotate dehydrogenase (quinone) from Rhodopseudomonas palustris (strain HaA2).